A 196-amino-acid polypeptide reads, in one-letter code: Acyl-homoserine-lactone synthase (196 aa).

It belongs to the autoinducer synthase family.

It carries out the reaction a fatty acyl-[ACP] + S-adenosyl-L-methionine = an N-acyl-L-homoserine lactone + S-methyl-5'-thioadenosine + holo-[ACP] + H(+). Functionally, required for the synthesis of a yet unknown N-aceyl-homoserine lactone (N-aceyl-HSL), an autoinducer molecule which binds to PhzR and thus regulates phenazine production. This Pseudomonas chlororaphis (Pseudomonas aureofaciens) protein is Acyl-homoserine-lactone synthase (phzI).